We begin with the raw amino-acid sequence, 745 residues long: Heterogeneous nuclear ribonucleoprotein U-like protein 2 (745 aa).

The SAP domain maps to 3 to 37 (VKRLKVTELRSELQRRGLDSRGLKMDLAQRLQEAL). 2 disordered regions span residues 44–239 (DEAG…DEEE) and 625–664 (EEARKLLPPSEKRTNRRNNRNKRNRQNRSRGQGYVGGQRR). Residues 73-97 (GDEEEEDDDEEEDEEALLEDEDEEP) are compositionally biased toward acidic residues. Over residues 142–161 (GEEHDNGKGEEDGPEERSGD) the composition is skewed to basic and acidic residues. Serine 159 bears the Phosphoserine mark. Phosphothreonine is present on threonine 163. 5 positions are modified to phosphoserine: serine 166, serine 183, serine 186, serine 224, and serine 226. Positions 183-221 (SEKSKPAGSDGERRGVKRQRDEKDEHGRAYYEFREEAYH) are enriched in basic and acidic residues. The region spanning 224–417 (SKSPPPPEEE…VELNFGQKEE (194 aa)) is the B30.2/SPRY domain. Positions 230–239 (PEEEAKDEEE) are enriched in acidic residues. The span at 625–637 (EEARKLLPPSEKR) shows a compositional bias: basic and acidic residues. Over residues 638–652 (TNRRNNRNKRNRQNR) the composition is skewed to basic residues. Omega-N-methylarginine occurs at positions 654, 682, 736, and 745.

As to quaternary structure, binds to MLF1 and retains it in the nucleus.

It localises to the nucleus. This is Heterogeneous nuclear ribonucleoprotein U-like protein 2 (Hnrnpul2) from Mus musculus (Mouse).